The primary structure comprises 84 residues: Envelope glycoprotein N (84 aa).

Positions 1–26 (MSCKKSARQSLYVSLCLFYILVFAAA) are cleaved as a signal peptide. Topologically, residues 27–47 (TEVDFYSPECHSHTYEIVLNS) are virion surface. A helical transmembrane segment spans residues 48-68 (FSSIWLLINLFLLLCSFAIFL). At 69 to 84 (KYWCYKTFASETVKGY) the chain is on the intravirion side.

It belongs to the herpesviridae glycoprotein N family. Interacts (via N-terminus) with gM (via N-terminus). The gM-gN heterodimer forms the gCII complex.

It localises to the virion membrane. Its subcellular location is the host membrane. The protein localises to the host Golgi apparatus. It is found in the host trans-Golgi network. Envelope glycoprotein necessary for proper maturation of gM and modulation of its membrane fusion activity. Also plays a critical role in virion morphogenesis. In Homo sapiens (Human), this protein is Envelope glycoprotein N.